The sequence spans 183 residues: Small ribosomal subunit protein uS4c (183 aa).

The S4 RNA-binding domain maps to 82–143 (MRLDNILFRL…KQRSKALIQN (62 aa)).

Belongs to the universal ribosomal protein uS4 family. As to quaternary structure, part of the 30S ribosomal subunit. Contacts protein S5. The interaction surface between S4 and S5 is involved in control of translational fidelity.

It is found in the plastid. The protein resides in the chloroplast. In terms of biological role, one of the primary rRNA binding proteins, it binds directly to 16S rRNA where it nucleates assembly of the body of the 30S subunit. Its function is as follows. With S5 and S12 plays an important role in translational accuracy. The chain is Small ribosomal subunit protein uS4c (rps4) from Sparaxis sp. (strain Lejeune 1997).